Here is a 171-residue protein sequence, read N- to C-terminus: Shikimate kinase (171 aa).

An ATP-binding site is contributed by 14-19 (GAGKST). Ser18 is a Mg(2+) binding site. Residues Asp36, Arg60, and Gly82 each contribute to the substrate site. Arg120 serves as a coordination point for ATP. Residue Arg139 participates in substrate binding. Residue Gln156 coordinates ATP.

It belongs to the shikimate kinase family. Monomer. Requires Mg(2+) as cofactor.

It localises to the cytoplasm. It catalyses the reaction shikimate + ATP = 3-phosphoshikimate + ADP + H(+). It participates in metabolic intermediate biosynthesis; chorismate biosynthesis; chorismate from D-erythrose 4-phosphate and phosphoenolpyruvate: step 5/7. Its function is as follows. Catalyzes the specific phosphorylation of the 3-hydroxyl group of shikimic acid using ATP as a cosubstrate. The sequence is that of Shikimate kinase from Alteromonas mediterranea (strain DSM 17117 / CIP 110805 / LMG 28347 / Deep ecotype).